The following is a 224-amino-acid chain: Transcription factor HEC3 (224 aa).

2 disordered regions span residues Ser-22–Gly-42 and Ser-68–Pro-88. The segment covering Lys-28–Asn-37 has biased composition (basic and acidic residues). Residues Ser-68–Gly-77 are compositionally biased toward low complexity. Residues Asp-78–Pro-88 are compositionally biased toward acidic residues. The bHLH domain maps to Ile-125–Leu-174. Residues Asn-183–Ile-224 are disordered. The span at Asp-194–Trp-204 shows a compositional bias: polar residues. Residues Gly-214 to Ile-224 show a composition bias toward gly residues.

As to quaternary structure, homodimer. Interacts with SPT. As to expression, gynoecium.

The protein localises to the nucleus. Functionally, required for the female reproductive tract development and fertility. The protein is Transcription factor HEC3 (HEC3) of Arabidopsis thaliana (Mouse-ear cress).